The primary structure comprises 280 residues: Mediator of RNA polymerase II transcription subunit 2 (280 aa).

The interval 212–247 (GLQNTSGGNEKKNDPQINFNDTNAPPSAVNVPENGN) is disordered. Polar residues predominate over residues 226–236 (PQINFNDTNAP).

Belongs to the Mediator complex subunit 2 family. Component of the Mediator complex.

It localises to the nucleus. In terms of biological role, component of the Mediator complex, a coactivator involved in the regulated transcription of nearly all RNA polymerase II-dependent genes. Mediator functions as a bridge to convey information from gene-specific regulatory proteins to the basal RNA polymerase II transcription machinery. Mediator is recruited to promoters by direct interactions with regulatory proteins and serves as a scaffold for the assembly of a functional preinitiation complex with RNA polymerase II and the general transcription factors. In Kluyveromyces lactis (strain ATCC 8585 / CBS 2359 / DSM 70799 / NBRC 1267 / NRRL Y-1140 / WM37) (Yeast), this protein is Mediator of RNA polymerase II transcription subunit 2 (MED2).